The following is a 415-amino-acid chain: Gamma-glutamyl phosphate reductase (415 aa).

This sequence belongs to the gamma-glutamyl phosphate reductase family.

The protein resides in the cytoplasm. It catalyses the reaction L-glutamate 5-semialdehyde + phosphate + NADP(+) = L-glutamyl 5-phosphate + NADPH + H(+). The protein operates within amino-acid biosynthesis; L-proline biosynthesis; L-glutamate 5-semialdehyde from L-glutamate: step 2/2. Functionally, catalyzes the NADPH-dependent reduction of L-glutamate 5-phosphate into L-glutamate 5-semialdehyde and phosphate. The product spontaneously undergoes cyclization to form 1-pyrroline-5-carboxylate. The polypeptide is Gamma-glutamyl phosphate reductase (Bacillus mycoides (strain KBAB4) (Bacillus weihenstephanensis)).